A 278-amino-acid polypeptide reads, in one-letter code: 3-methyl-2-oxobutanoate hydroxymethyltransferase (278 aa).

Mg(2+) is bound by residues Asp-43 and Asp-82. Residues 43-44 (DS), Asp-82, and Lys-112 contribute to the 3-methyl-2-oxobutanoate site. Position 114 (Glu-114) interacts with Mg(2+). The active-site Proton acceptor is the Glu-181.

The protein belongs to the PanB family. In terms of assembly, homodecamer; pentamer of dimers. The cofactor is Mg(2+).

Its subcellular location is the cytoplasm. The enzyme catalyses 3-methyl-2-oxobutanoate + (6R)-5,10-methylene-5,6,7,8-tetrahydrofolate + H2O = 2-dehydropantoate + (6S)-5,6,7,8-tetrahydrofolate. Its pathway is cofactor biosynthesis; (R)-pantothenate biosynthesis; (R)-pantoate from 3-methyl-2-oxobutanoate: step 1/2. Catalyzes the reversible reaction in which hydroxymethyl group from 5,10-methylenetetrahydrofolate is transferred onto alpha-ketoisovalerate to form ketopantoate. The sequence is that of 3-methyl-2-oxobutanoate hydroxymethyltransferase from Bacillus cereus (strain ATCC 14579 / DSM 31 / CCUG 7414 / JCM 2152 / NBRC 15305 / NCIMB 9373 / NCTC 2599 / NRRL B-3711).